The primary structure comprises 676 residues: Capsid vertex component 1 (676 aa).

The span at 253-264 (HPVRPSSSRVAS) shows a compositional bias: low complexity. The interval 253–308 (HPVRPSSSRVASGLLQSAKGHGAQTSNTDPINNGSFDGVLEPPGQGRFTGKKNNSS) is disordered. Positions 275–287 (AQTSNTDPINNGS) are enriched in polar residues.

Belongs to the herpesviridae CVC1 protein family. In terms of assembly, interacts (via C-terminus) with capsid vertex component 2/CVC2.

Its subcellular location is the virion. The protein localises to the host nucleus. Functionally, capsid vertex-specific component that plays a role during viral DNA encapsidation, assuring correct genome cleavage and presumably stabilizing capsids that contain full-length viral genomes. This Varicella-zoster virus (strain Dumas) (HHV-3) protein is Capsid vertex component 1.